Here is a 288-residue protein sequence, read N- to C-terminus: Bifunctional protein FolD (288 aa).

Residues 166–168 and Ile232 each bind NADP(+); that span reads GAS.

It belongs to the tetrahydrofolate dehydrogenase/cyclohydrolase family. As to quaternary structure, homodimer.

It catalyses the reaction (6R)-5,10-methylene-5,6,7,8-tetrahydrofolate + NADP(+) = (6R)-5,10-methenyltetrahydrofolate + NADPH. The enzyme catalyses (6R)-5,10-methenyltetrahydrofolate + H2O = (6R)-10-formyltetrahydrofolate + H(+). It participates in one-carbon metabolism; tetrahydrofolate interconversion. In terms of biological role, catalyzes the oxidation of 5,10-methylenetetrahydrofolate to 5,10-methenyltetrahydrofolate and then the hydrolysis of 5,10-methenyltetrahydrofolate to 10-formyltetrahydrofolate. The polypeptide is Bifunctional protein FolD (Yersinia pseudotuberculosis serotype O:1b (strain IP 31758)).